The following is a 271-amino-acid chain: Ribosomal RNA small subunit methyltransferase A (271 aa).

Residues His11, Leu13, Gly38, Glu58, Asp86, and Asn101 each contribute to the S-adenosyl-L-methionine site.

Belongs to the class I-like SAM-binding methyltransferase superfamily. rRNA adenine N(6)-methyltransferase family. RsmA subfamily.

It is found in the cytoplasm. It carries out the reaction adenosine(1518)/adenosine(1519) in 16S rRNA + 4 S-adenosyl-L-methionine = N(6)-dimethyladenosine(1518)/N(6)-dimethyladenosine(1519) in 16S rRNA + 4 S-adenosyl-L-homocysteine + 4 H(+). Functionally, specifically dimethylates two adjacent adenosines (A1518 and A1519) in the loop of a conserved hairpin near the 3'-end of 16S rRNA in the 30S particle. May play a critical role in biogenesis of 30S subunits. The chain is Ribosomal RNA small subunit methyltransferase A from Helicobacter pylori (strain ATCC 700392 / 26695) (Campylobacter pylori).